The following is a 106-amino-acid chain: Large ribosomal subunit protein bL21 (106 aa).

This sequence belongs to the bacterial ribosomal protein bL21 family. Part of the 50S ribosomal subunit. Contacts protein L20.

Functionally, this protein binds to 23S rRNA in the presence of protein L20. The sequence is that of Large ribosomal subunit protein bL21 from Xanthomonas oryzae pv. oryzae (strain MAFF 311018).